The following is a 453-amino-acid chain: NADH-quinone oxidoreductase subunit D (453 aa).

The span at 1–21 (MKDTETRPGRHRAPEPAHPEQ) shows a compositional bias: basic and acidic residues. The interval 1-30 (MKDTETRPGRHRAPEPAHPEQPDTTGDTVV) is disordered.

The protein belongs to the complex I 49 kDa subunit family. In terms of assembly, NDH-1 is composed of 14 different subunits. Subunits NuoB, C, D, E, F, and G constitute the peripheral sector of the complex.

The protein resides in the cell membrane. It catalyses the reaction a quinone + NADH + 5 H(+)(in) = a quinol + NAD(+) + 4 H(+)(out). Its function is as follows. NDH-1 shuttles electrons from NADH, via FMN and iron-sulfur (Fe-S) centers, to quinones in the respiratory chain. The immediate electron acceptor for the enzyme in this species is believed to be a menaquinone. Couples the redox reaction to proton translocation (for every two electrons transferred, four hydrogen ions are translocated across the cytoplasmic membrane), and thus conserves the redox energy in a proton gradient. This is NADH-quinone oxidoreductase subunit D from Nocardia farcinica (strain IFM 10152).